The sequence spans 305 residues: tRNA pseudouridine synthase B (305 aa).

Asp-48 functions as the Nucleophile in the catalytic mechanism.

This sequence belongs to the pseudouridine synthase TruB family. Type 1 subfamily.

The catalysed reaction is uridine(55) in tRNA = pseudouridine(55) in tRNA. In terms of biological role, responsible for synthesis of pseudouridine from uracil-55 in the psi GC loop of transfer RNAs. The sequence is that of tRNA pseudouridine synthase B from Pseudomonas fluorescens (strain Pf0-1).